We begin with the raw amino-acid sequence, 856 residues long: Rab effector MyRIP (856 aa).

The region spanning 4-124 (KLDLSGLTDD…TQSLEWFYNN (121 aa)) is the RabBD domain. The segment at 63–105 (CCMRCCSPFTFLVNARRRCGECKFSVCKSCCSYQKHEKLWVCC) adopts an FYVE-type zinc-finger fold. The segment at 143-560 (KKHRLESGAC…AQVSDNVSET (418 aa)) is myosin-binding. The tract at residues 193–209 (VALQVAEEAIEEAISKA) is PKA-binding. The segment at 232–248 (LAEELAGTILQRIIRKQ) is negative regulation of PKA-binding. The tract at residues 251–287 (KADLHAEEEEPECTRPQSSGVKARGEGTAAPPGRHKA) is disordered. A Phosphoserine modification is found at Ser-299. Positions 302–311 (TEDTLKTSSA) are enriched in polar residues. Disordered regions lie at residues 302-323 (TEDTLKTSSAEAAPRQPKDRAQ), 350-376 (QSPDGNWMTLKDSSRQPPTRLLAKPKS), 392-578 (YDEL…SAEE), 592-625 (SEKETSSGEDQESESKTEPKNQKGSLSSEENNQG), 778-805 (RRDQKQRSQVQTIDTSRQQRRKLPAPPV), and 826-845 (LLQGSSTNRPTASTSNTKDL). At Ser-351 the chain carries Phosphoserine. A compositionally biased stretch (acidic residues) spans 395 to 405 (LGSDSEEDFDY). Low complexity-rich tracts occupy residues 427–437 (PAQAQSSGQGP) and 450–460 (SDSETSSTSSS). The interval 495-856 (FNPQAAGGET…EPVLESAVMY (362 aa)) is actin-binding. 4 stretches are compositionally biased toward polar residues: residues 551-574 (AQVSDNVSETDISNEAQNSRSSTD), 613-625 (QKGSLSSEENNQG), 784-793 (RSQVQTIDTS), and 826-843 (LLQGSSTNRPTASTSNTK).

As to quaternary structure, binds MYO5A, MYO7A and F-actin. Binds RAB27A that has been activated by GTP-binding via its N-terminus. Interacts with PRKAR2A. Interacts with components of the exocyst complex, including EXOC3 and EXOC4.

Its subcellular location is the cytoplasm. It localises to the perinuclear region. The protein resides in the cytoplasmic vesicle. It is found in the secretory vesicle. The protein localises to the melanosome. In terms of biological role, rab effector protein involved in melanosome transport. Serves as link between melanosome-bound RAB27A and the motor proteins MYO5A and MYO7A. May link RAB27A-containing vesicles to actin filaments. Functions as a protein kinase A-anchoring protein (AKAP). May act as a scaffolding protein that links PKA to components of the exocytosis machinery, thus facilitating exocytosis, including insulin release. The protein is Rab effector MyRIP (Myrip) of Rattus norvegicus (Rat).